The sequence spans 588 residues: Phomenoic acid biosynthesis cluster cytochrome P450 monooxygenase (588 aa).

An N-terminal signal peptide occupies residues 1 to 21; it reads MSFARIFITILLLFILRRAFK. N293 carries N-linked (GlcNAc...) asparagine glycosylation. The span at 467 to 486 shows a compositional bias: basic and acidic residues; sequence HQSDPDRFKPSPDAPDEKLF. Residues 467–490 form a disordered region; sequence HQSDPDRFKPSPDAPDEKLFRPSR. A heme-binding site is contributed by C519.

It belongs to the cytochrome P450 family. Requires heme as cofactor.

The protein operates within secondary metabolite biosynthesis. Its function is as follows. Cytochrome P450 monooxygenase; part of the gene cluster that mediates the biosynthesis of phomenoic acid, a long chain aliphatic carboxylic acid that does not appear to be essential for pathogenicity but may play a role in allowing to outcompete other fungi in the environmental niche via its antifungal properties. The polyketide synthase produces the long methylated aliphatic carboxylic acid chain of phomenoic acid. The cluster-specific cytochrome P450 monooxygenase may then hydroxylate the methyl group of carbon 31. The putative dehydrogenase YogA, which has no obvious role in phomenoic acid biosynthesis, may further modify phomenoic acid to produce a compound not identified yet. The polypeptide is Phomenoic acid biosynthesis cluster cytochrome P450 monooxygenase (Leptosphaeria maculans (strain JN3 / isolate v23.1.3 / race Av1-4-5-6-7-8) (Blackleg fungus)).